A 640-amino-acid chain; its full sequence is 1-deoxy-D-xylulose-5-phosphate synthase (640 aa).

Thiamine diphosphate contacts are provided by residues histidine 75 and 117–119; that span reads GHA. Aspartate 146 is a Mg(2+) binding site. Thiamine diphosphate is bound by residues 147–148, asparagine 175, and glutamate 370; that span reads AA. Asparagine 175 contacts Mg(2+).

The protein belongs to the transketolase family. DXPS subfamily. Homodimer. It depends on Mg(2+) as a cofactor. The cofactor is thiamine diphosphate.

The enzyme catalyses D-glyceraldehyde 3-phosphate + pyruvate + H(+) = 1-deoxy-D-xylulose 5-phosphate + CO2. It functions in the pathway metabolic intermediate biosynthesis; 1-deoxy-D-xylulose 5-phosphate biosynthesis; 1-deoxy-D-xylulose 5-phosphate from D-glyceraldehyde 3-phosphate and pyruvate: step 1/1. In terms of biological role, catalyzes the acyloin condensation reaction between C atoms 2 and 3 of pyruvate and glyceraldehyde 3-phosphate to yield 1-deoxy-D-xylulose-5-phosphate (DXP). This chain is 1-deoxy-D-xylulose-5-phosphate synthase, found in Chlamydia trachomatis serovar A (strain ATCC VR-571B / DSM 19440 / HAR-13).